Reading from the N-terminus, the 695-residue chain is NADPH--cytochrome P450 reductase (695 aa).

Residues M1–D8 lie on the Lumenal side of the membrane. Residues I9 to V31 form a helical membrane-spanning segment. The Cytoplasmic portion of the chain corresponds to P32–S695. A Flavodoxin-like domain is found at C66–W221. Residues S72–A77, A123–G126, L169–N178, and D204 each bind FMN. Residues H277–P538 enclose the FAD-binding FR-type domain. NADP(+) is bound at residue R296. Residues R451 to S454, T469 to V471, and G486 to T489 contribute to the FAD site. NADP(+) is bound by residues T552, S614–R615, K620–Q624, and E656. An FAD-binding site is contributed by W694.

This sequence belongs to the NADPH--cytochrome P450 reductase family. It in the N-terminal section; belongs to the flavodoxin family. In the C-terminal section; belongs to the flavoprotein pyridine nucleotide cytochrome reductase family. FAD is required as a cofactor. Requires FMN as cofactor.

It is found in the endoplasmic reticulum membrane. Its subcellular location is the mitochondrion outer membrane. It localises to the cell membrane. The catalysed reaction is 2 oxidized [cytochrome P450] + NADPH = 2 reduced [cytochrome P450] + NADP(+) + H(+). In terms of biological role, this enzyme is required for electron transfer from NADP to cytochrome P450 in microsomes. It can also provide electron transfer to heme oxygenase and cytochrome B5. Involved in ergosterol biosynthesis. The sequence is that of NADPH--cytochrome P450 reductase from Aspergillus fumigatus (strain ATCC MYA-4609 / CBS 101355 / FGSC A1100 / Af293) (Neosartorya fumigata).